Here is a 402-residue protein sequence, read N- to C-terminus: Secreted RxLR effector protein 73 (402 aa).

The first 23 residues, 1 to 23 (MRLLHVVVATVSLTGAITSLIAA), serve as a signal peptide directing secretion. Residue asparagine 27 is glycosylated (N-linked (GlcNAc...) asparagine). The RxLR signature appears at 104 to 107 (RVLR). 5 N-linked (GlcNAc...) asparagine glycosylation sites follow: asparagine 111, asparagine 134, asparagine 143, asparagine 165, and asparagine 286.

This sequence belongs to the RxLR effector family.

The protein localises to the secreted. Its subcellular location is the host cell. In terms of biological role, secreted effector that completely suppresses the host cell death induced by cell death-inducing proteins. In Plasmopara viticola (Downy mildew of grapevine), this protein is Secreted RxLR effector protein 73.